A 213-amino-acid chain; its full sequence is Kynurenine formamidase (213 aa).

Trp-18 contributes to the substrate binding site. Residues His-48, His-52, and Asp-54 each coordinate Zn(2+). His-58 serves as the catalytic Proton donor/acceptor. Zn(2+)-binding residues include His-160 and Glu-172.

The protein belongs to the Cyclase 1 superfamily. KynB family. As to quaternary structure, homodimer. The cofactor is Zn(2+).

It carries out the reaction N-formyl-L-kynurenine + H2O = L-kynurenine + formate + H(+). Its pathway is amino-acid degradation; L-tryptophan degradation via kynurenine pathway; L-kynurenine from L-tryptophan: step 2/2. Catalyzes the hydrolysis of N-formyl-L-kynurenine to L-kynurenine, the second step in the kynurenine pathway of tryptophan degradation. The chain is Kynurenine formamidase from Burkholderia pseudomallei (strain 1710b).